The following is a 175-amino-acid chain: Shikimate kinase (175 aa).

17-22 (GAGKST) provides a ligand contact to ATP. A Mg(2+)-binding site is contributed by Ser-21. 3 residues coordinate substrate: Asp-39, Arg-63, and Gly-85. Position 123 (Arg-123) interacts with ATP. Arg-142 provides a ligand contact to substrate. Gln-159 contacts ATP.

Belongs to the shikimate kinase family. As to quaternary structure, monomer. The cofactor is Mg(2+).

It localises to the cytoplasm. It carries out the reaction shikimate + ATP = 3-phosphoshikimate + ADP + H(+). It participates in metabolic intermediate biosynthesis; chorismate biosynthesis; chorismate from D-erythrose 4-phosphate and phosphoenolpyruvate: step 5/7. Its function is as follows. Catalyzes the specific phosphorylation of the 3-hydroxyl group of shikimic acid using ATP as a cosubstrate. The protein is Shikimate kinase of Photobacterium profundum (strain SS9).